The following is a 186-amino-acid chain: TATA box-binding protein-like 1 (186 aa).

It belongs to the TBP family.

It is found in the cytoplasm. It localises to the nucleus. Functionally, part of a specialized transcription system that mediates the transcription of most ribosomal proteins through the 5'-TCT-3' motif which is a core promoter element at these genes. Seems to also mediate the transcription of NF1. Does not bind the TATA box. Members of the TBP family are differentially required to regulate transcription and development during early embryogenesis. Particularly regulates genes that have a role in catabolism. This is TATA box-binding protein-like 1 (tbpl1) from Xenopus tropicalis (Western clawed frog).